The chain runs to 703 residues: RING finger protein 214 (703 aa).

3 disordered regions span residues 1-59 (MAAS…TITK), 104-134 (GSQSDLKDVASTAGEEGDTSLRESLHPVTRS), and 146-197 (SRNC…SSSL). Alanine 2 bears the N-acetylalanine mark. 4 positions are modified to phosphoserine: serine 15, serine 40, serine 47, and serine 54. Polar residues predominate over residues 37 to 59 (TKDSAQKQKNSPLLSVSSQTITK). Phosphoserine occurs at positions 176 and 196. The stretch at 220–379 (QDIEKNLDKM…AEKEAELHLT (160 aa)) forms a coiled coil. Residues 486 to 552 (FPILNPALSQ…SAETPRPQPV (67 aa)) form a disordered region. Residues 493–504 (LSQPSQPSSPLP) show a composition bias toward low complexity. Phosphoserine occurs at positions 497, 511, and 516. Over residues 523–536 (PHMPPAASIPPPPG) the composition is skewed to pro residues. An RING-type; atypical zinc finger spans residues 658 to 700 (CLMCQKLVQPSELHPMACTHVLHKECIKFWAQTNTNDTCPFCP).

The protein is RING finger protein 214 (RNF214) of Homo sapiens (Human).